The chain runs to 140 residues: Organic hydroperoxide resistance protein-like (140 aa).

The protein belongs to the OsmC/Ohr family.

The sequence is that of Organic hydroperoxide resistance protein-like from Mycoplasma genitalium (strain ATCC 33530 / DSM 19775 / NCTC 10195 / G37) (Mycoplasmoides genitalium).